The sequence spans 334 residues: Phosphate acyltransferase (334 aa).

This sequence belongs to the PlsX family. Homodimer. Probably interacts with PlsY.

The protein resides in the cytoplasm. It catalyses the reaction a fatty acyl-[ACP] + phosphate = an acyl phosphate + holo-[ACP]. Its pathway is lipid metabolism; phospholipid metabolism. Catalyzes the reversible formation of acyl-phosphate (acyl-PO(4)) from acyl-[acyl-carrier-protein] (acyl-ACP). This enzyme utilizes acyl-ACP as fatty acyl donor, but not acyl-CoA. This is Phosphate acyltransferase from Caldicellulosiruptor bescii (strain ATCC BAA-1888 / DSM 6725 / KCTC 15123 / Z-1320) (Anaerocellum thermophilum).